Here is a 518-residue protein sequence, read N- to C-terminus: Probable thiamine biosynthetic bifunctional enzyme (518 aa).

The segment at 1-229 (MKRQIDYSLY…ATPPCFAQAR (229 aa)) is thiamine-phosphate synthase. 4-amino-2-methyl-5-(diphosphooxymethyl)pyrimidine-binding positions include 40–44 (QHREK) and N72. Mg(2+)-binding residues include D73 and D92. S111 contacts 4-amino-2-methyl-5-(diphosphooxymethyl)pyrimidine. 137 to 139 (TNT) serves as a coordination point for 2-[(2R,5Z)-2-carboxy-4-methylthiazol-5(2H)-ylidene]ethyl phosphate. Residue K140 coordinates 4-amino-2-methyl-5-(diphosphooxymethyl)pyrimidine. 2-[(2R,5Z)-2-carboxy-4-methylthiazol-5(2H)-ylidene]ethyl phosphate-binding positions include G173 and 199–200 (VS). The hydroxyethylthiazole kinase stretch occupies residues 230–518 (SSLTTPKDLL…IERAKLEKAE (289 aa)). M281 provides a ligand contact to 5-(2-hydroxyethyl)-4-methylthiazole. ATP contacts are provided by K355 and S403. Residue A430 coordinates 5-(2-hydroxyethyl)-4-methylthiazole. C433 serves as the catalytic Proton acceptor; for hydroxyethylthiazole kinase activity.

In the N-terminal section; belongs to the thiamine-phosphate synthase family. It in the C-terminal section; belongs to the Thz kinase family. The cofactor is Mg(2+).

It catalyses the reaction 2-[(2R,5Z)-2-carboxy-4-methylthiazol-5(2H)-ylidene]ethyl phosphate + 4-amino-2-methyl-5-(diphosphooxymethyl)pyrimidine + 2 H(+) = thiamine phosphate + CO2 + diphosphate. It carries out the reaction 2-(2-carboxy-4-methylthiazol-5-yl)ethyl phosphate + 4-amino-2-methyl-5-(diphosphooxymethyl)pyrimidine + 2 H(+) = thiamine phosphate + CO2 + diphosphate. The catalysed reaction is 4-methyl-5-(2-phosphooxyethyl)-thiazole + 4-amino-2-methyl-5-(diphosphooxymethyl)pyrimidine + H(+) = thiamine phosphate + diphosphate. The enzyme catalyses 5-(2-hydroxyethyl)-4-methylthiazole + ATP = 4-methyl-5-(2-phosphooxyethyl)-thiazole + ADP + H(+). It participates in cofactor biosynthesis; thiamine diphosphate biosynthesis; 4-methyl-5-(2-phosphoethyl)-thiazole from 5-(2-hydroxyethyl)-4-methylthiazole: step 1/1. Its pathway is cofactor biosynthesis; thiamine diphosphate biosynthesis; thiamine phosphate from 4-amino-2-methyl-5-diphosphomethylpyrimidine and 4-methyl-5-(2-phosphoethyl)-thiazole: step 1/1. In terms of biological role, condenses 4-methyl-5-(beta-hydroxyethyl)thiazole monophosphate (THZ-P) and 2-methyl-4-amino-5-hydroxymethyl pyrimidine pyrophosphate (HMP-PP) to form thiamine monophosphate (TMP). The polypeptide is Probable thiamine biosynthetic bifunctional enzyme (thi4) (Schizosaccharomyces pombe (strain 972 / ATCC 24843) (Fission yeast)).